A 78-amino-acid chain; its full sequence is Large ribosomal subunit protein bL28 (78 aa).

The protein belongs to the bacterial ribosomal protein bL28 family.

The chain is Large ribosomal subunit protein bL28 from Erwinia tasmaniensis (strain DSM 17950 / CFBP 7177 / CIP 109463 / NCPPB 4357 / Et1/99).